The following is a 129-amino-acid chain: Large ribosomal subunit protein bL12 (129 aa).

It belongs to the bacterial ribosomal protein bL12 family. In terms of assembly, homodimer. Part of the ribosomal stalk of the 50S ribosomal subunit. Forms a multimeric L10(L12)X complex, where L10 forms an elongated spine to which 2 to 4 L12 dimers bind in a sequential fashion. Binds GTP-bound translation factors.

Its function is as follows. Forms part of the ribosomal stalk which helps the ribosome interact with GTP-bound translation factors. Is thus essential for accurate translation. The chain is Large ribosomal subunit protein bL12 from Pseudothermotoga lettingae (strain ATCC BAA-301 / DSM 14385 / NBRC 107922 / TMO) (Thermotoga lettingae).